We begin with the raw amino-acid sequence, 320 residues long: Olfactory receptor 10J1 (320 aa).

Residues 1-36 lie on the Extracellular side of the membrane; that stretch reads MLLCFRFGNQSMKRENFTLITDFVFQGFSSFHEQQI. N-linked (GlcNAc...) asparagine glycosylation is found at N9 and N16. A helical membrane pass occupies residues 37–57; the sequence is TLFGVFLALYILTLAGNIIIV. Residues 58–65 lie on the Cytoplasmic side of the membrane; sequence TIIRMDLH. A helical membrane pass occupies residues 66 to 86; the sequence is LHTPMYFFLSMLSTSETVYTL. Over 87–110 the chain is Extracellular; it reads VILPRMLSSLVGMSQPISLAGCAT. C108 and C199 are oxidised to a cystine. A helical transmembrane segment spans residues 111-131; sequence QMFFFVTFGITNCFLLTAMGY. The Cytoplasmic segment spans residues 132 to 150; the sequence is DRYVAICNPLRYMVIMNKR. The helical transmembrane segment at 151–171 threads the bilayer; it reads LRIQLVLGACSIGLIVAITQV. The Extracellular segment spans residues 172–207; that stretch reads TSVFRLPFCARKVPHFFCDIRPVMKLSCIDTTVNEI. A helical transmembrane segment spans residues 208–227; that stretch reads LTLIISVLVLVVPMGLVFIS. The Cytoplasmic portion of the chain corresponds to 228–247; that stretch reads YVLIISTILKIASVEGRKKA. Residues 248 to 268 traverse the membrane as a helical segment; the sequence is FATCASHLTVVIVHYSCASIA. Residues 269–281 are Extracellular-facing; that stretch reads YLKPKSENTREHD. The helical transmembrane segment at 282–302 threads the bilayer; that stretch reads QLISVTYTVITPLLNPVVYTL. The Cytoplasmic portion of the chain corresponds to 303–320; sequence RNKEVKDALCRAVGGKFS.

It belongs to the G-protein coupled receptor 1 family.

It is found in the cell membrane. Its function is as follows. Odorant receptor. This chain is Olfactory receptor 10J1 (OR10J1), found in Homo sapiens (Human).